Reading from the N-terminus, the 384-residue chain is Cytochrome b (384 aa).

4 helical membrane-spanning segments follow: residues 32–52 (FGFLAFICLAVQIITGIFLAI), 76–98 (WLLRYAHANGASIFFIIIYIHIS), 113–133 (TWVVGVFILLLIMATAFMGYV), and 179–199 (FFSFHYLFPFIIVAIAFVHMA). Heme b contacts are provided by His82 and His96. The heme b site is built by His183 and His197. Residue His202 participates in a ubiquinone binding. The next 4 membrane-spanning stretches (helical) occupy residues 225 to 245 (FIIKDAFGLVLFLLFFSLFVY), 289 to 309 (LGGVIAIIISILILAFLPWIT), 321 to 341 (LYKKLFWILFSIVLILGWIGG), and 348 to 368 (YVVIGQLITFLYFVYFLIFIP).

Belongs to the cytochrome b family. The main subunits of complex b-c1 are: cytochrome b, cytochrome c1 and the Rieske protein. Heme b is required as a cofactor.

Its subcellular location is the mitochondrion inner membrane. Functionally, component of the ubiquinol-cytochrome c reductase complex (complex III or cytochrome b-c1 complex) that is part of the mitochondrial respiratory chain. The b-c1 complex mediates electron transfer from ubiquinol to cytochrome c. Contributes to the generation of a proton gradient across the mitochondrial membrane that is then used for ATP synthesis. The polypeptide is Cytochrome b (MT-CYB) (Cyanidium caldarium (Red alga)).